The sequence spans 689 residues: Glycine--tRNA ligase beta subunit (689 aa).

This sequence belongs to the class-II aminoacyl-tRNA synthetase family. In terms of assembly, tetramer of two alpha and two beta subunits.

It is found in the cytoplasm. It catalyses the reaction tRNA(Gly) + glycine + ATP = glycyl-tRNA(Gly) + AMP + diphosphate. This is Glycine--tRNA ligase beta subunit from Citrobacter koseri (strain ATCC BAA-895 / CDC 4225-83 / SGSC4696).